Consider the following 784-residue polypeptide: DNA ligase (784 aa).

Residues 31–35 (DAEYD), 80–81 (SL), and E120 each bind NAD(+). K122 acts as the N6-AMP-lysine intermediate in catalysis. NAD(+) is bound by residues R143, E180, K296, and K320. Zn(2+) contacts are provided by C414, C417, C444, and C450. One can recognise a BRCT domain in the interval 701 to 784 (AEGLPLAGQT…AFMAEQGITL (84 aa)).

It belongs to the NAD-dependent DNA ligase family. LigA subfamily. The cofactor is Mg(2+). Mn(2+) serves as cofactor.

It catalyses the reaction NAD(+) + (deoxyribonucleotide)n-3'-hydroxyl + 5'-phospho-(deoxyribonucleotide)m = (deoxyribonucleotide)n+m + AMP + beta-nicotinamide D-nucleotide.. Its function is as follows. DNA ligase that catalyzes the formation of phosphodiester linkages between 5'-phosphoryl and 3'-hydroxyl groups in double-stranded DNA using NAD as a coenzyme and as the energy source for the reaction. It is essential for DNA replication and repair of damaged DNA. The chain is DNA ligase from Pseudomonas entomophila (strain L48).